The primary structure comprises 180 residues: Stathmin-3 (180 aa).

Residues cysteine 22 and cysteine 24 are each lipidated (S-palmitoyl cysteine). The SLD domain maps to 38–180 (GDMEVKQLDK…NKEQREEMSG (143 aa)). Residues serine 50, serine 60, serine 65, serine 68, serine 72, serine 73, and serine 81 each carry the phosphoserine modification. Residues 58–81 (LKSPSDLSPESPVLSSPPKRKDAS) are disordered. Low complexity predominate over residues 60–74 (SPSDLSPESPVLSSP). Residues 75–179 (PKRKDASLEE…RNKEQREEMS (105 aa)) are a coiled coil.

Belongs to the stathmin family. As to quaternary structure, interacts with STAT3. Interacts with CLU (secreted form); this interaction may act as an important modulator during neuronal differentiation. In terms of processing, N-terminal palmitoylation promotes specific anchoring to the cytosolic leaflet of Golgi membranes and subsequent vesicular trafficking along dendrites and axons. Neuronal Stathmins are substrates for palmitoyltransferases ZDHHC3, ZDHHC7 and ZDHHC15. Neuron specific.

The protein resides in the golgi apparatus. It is found in the cell projection. Its subcellular location is the growth cone. The protein localises to the axon. It localises to the cytoplasm. The protein resides in the cytosol. Exhibits microtubule-destabilizing activity, which is antagonized by STAT3. The chain is Stathmin-3 (Stmn3) from Rattus norvegicus (Rat).